The following is a 161-amino-acid chain: Small ribosomal subunit protein uS9 (161 aa).

The tract at residues 1–38 (MAQTITSLADLKQGPGAEPAGLSAEPQEPKLDKEGRAY) is disordered. Positions 27–38 (QEPKLDKEGRAY) are enriched in basic and acidic residues.

It belongs to the universal ribosomal protein uS9 family.

The protein is Small ribosomal subunit protein uS9 of Rhodospirillum centenum (strain ATCC 51521 / SW).